The following is a 441-amino-acid chain: MKKFSVVIAGGGSTFTPGIVLMLLDNMDKFPIRKLKFYDNDKERQAIVAGACEIILKEKAPEIEFLATTNPKEAFTDVDFVMAHIRVGKYAMRELDEKIPLKYGVVGQETCGPGGIAYGMRSIGGVIEILDYMEKYSPNAWMLNYSNPAAIVAEATRKLRPNSKILNICDMPIGIETRMAEILGLESRKEMTVKYYGLNHFGWWSDIRDKDGNDLMPKLKEHVKKYGYVAENGDTQHTDASWNDTFAKAKDVYAVDPSTLPNTYLKYYLFPDYVVEHSNKEYTRANEVMDGREKFVFGECKKVIENQSTKGCKMEIDEHASYIVDLARAISYNTHERMLLIVPNNGSIENFDSTGMVEIPCIVGSNGPEPLTMGKIPQFQKGLMEQQVSVEKLVVEAWKEKSYQKLWQAITLSRTVPSAKVAKQILDELIEVNKDYWPELN.

Residue 4-70 coordinates NAD(+); that stretch reads FSVVIAGGGS…PEIEFLATTN (67 aa). Residues Arg93 and Asn147 each coordinate substrate. Cys169 provides a ligand contact to Mn(2+). Asp170 functions as the Proton donor in the catalytic mechanism. Residue His200 coordinates Mn(2+). The active-site Proton acceptor is Tyr264. Arg284 is a binding site for substrate.

Homotetramer. The cofactor is NAD(+). Mn(2+) is required as a cofactor.

It catalyses the reaction alpha-maltose 6'-phosphate + H2O = D-glucose 6-phosphate + D-glucose. Functionally, catalyzes the hydrolysis of O-alpha-linked disaccharide 6-phosphates, including maltose-6'P and all five phosphorylated isomers of sucrose, but not sucrose-6P. Does not hydrolyze beta-linked disaccharide 6-phosphates such as cellobiose-6'P and gentiobiose-6'P. Is involved in the dissimilation of maltose and related O-alpha-linked glucosides produced via the phosphoenolpyruvate-dependent sugar phosphotransferase system (PEP-PTS). This Clostridium acetobutylicum (strain ATCC 824 / DSM 792 / JCM 1419 / IAM 19013 / LMG 5710 / NBRC 13948 / NRRL B-527 / VKM B-1787 / 2291 / W) protein is Maltose-6'-phosphate glucosidase MalH (malH).